A 1070-amino-acid polypeptide reads, in one-letter code: DNA-directed RNA polymerase subunit beta (1070 aa).

The protein belongs to the RNA polymerase beta chain family. As to quaternary structure, in plastids the minimal PEP RNA polymerase catalytic core is composed of four subunits: alpha, beta, beta', and beta''. When a (nuclear-encoded) sigma factor is associated with the core the holoenzyme is formed, which can initiate transcription.

It is found in the plastid. The protein localises to the chloroplast. The enzyme catalyses RNA(n) + a ribonucleoside 5'-triphosphate = RNA(n+1) + diphosphate. Its function is as follows. DNA-dependent RNA polymerase catalyzes the transcription of DNA into RNA using the four ribonucleoside triphosphates as substrates. This Solanum tuberosum (Potato) protein is DNA-directed RNA polymerase subunit beta.